The following is a 127-amino-acid chain: Ribosome-binding factor A (127 aa).

Belongs to the RbfA family. Monomer. Binds 30S ribosomal subunits, but not 50S ribosomal subunits or 70S ribosomes.

Its subcellular location is the cytoplasm. One of several proteins that assist in the late maturation steps of the functional core of the 30S ribosomal subunit. Associates with free 30S ribosomal subunits (but not with 30S subunits that are part of 70S ribosomes or polysomes). Required for efficient processing of 16S rRNA. May interact with the 5'-terminal helix region of 16S rRNA. In Aromatoleum aromaticum (strain DSM 19018 / LMG 30748 / EbN1) (Azoarcus sp. (strain EbN1)), this protein is Ribosome-binding factor A.